A 427-amino-acid chain; its full sequence is Four-jointed box protein 1 (427 aa).

Residues 1 to 18 (MRALSANLFAVLLMCALA) form the signal peptide. 3 N-linked (GlcNAc...) asparagine glycosylation sites follow: Asn81, Asn244, and Asn270.

It is found in the secreted. May act as an inhibitor of dendrite extension and branching. In Xiphophorus maculatus (Southern platyfish), this protein is Four-jointed box protein 1 (fjx1).